Here is a 192-residue protein sequence, read N- to C-terminus: Orotate phosphoribosyltransferase (192 aa).

A 5-phospho-alpha-D-ribose 1-diphosphate-binding site is contributed by 116-124 (EDIVTTGLS). Orotate contacts are provided by Thr120 and Arg148.

It belongs to the purine/pyrimidine phosphoribosyltransferase family. PyrE subfamily. In terms of assembly, homodimer. The cofactor is Mg(2+).

It catalyses the reaction orotidine 5'-phosphate + diphosphate = orotate + 5-phospho-alpha-D-ribose 1-diphosphate. The protein operates within pyrimidine metabolism; UMP biosynthesis via de novo pathway; UMP from orotate: step 1/2. Catalyzes the transfer of a ribosyl phosphate group from 5-phosphoribose 1-diphosphate to orotate, leading to the formation of orotidine monophosphate (OMP). The chain is Orotate phosphoribosyltransferase from Brucella canis (strain ATCC 23365 / NCTC 10854 / RM-666).